Here is a 155-residue protein sequence, read N- to C-terminus: Interleukin-2 (155 aa).

Positions 1–20 (MYKIQLLSCIALTLALVANG) are cleaved as a signal peptide. Threonine 23 carries O-linked (GalNAc...) threonine glycosylation. An intrachain disulfide couples cysteine 79 to cysteine 127.

It belongs to the IL-2 family.

It localises to the secreted. Functionally, cytokine produced by activated CD4-positive helper T-cells and to a lesser extend activated CD8-positive T-cells and natural killer (NK) cells that plays pivotal roles in the immune response and tolerance. Binds to a receptor complex composed of either the high-affinity trimeric IL-2R (IL2RA/CD25, IL2RB/CD122 and IL2RG/CD132) or the low-affinity dimeric IL-2R (IL2RB and IL2RG). Interaction with the receptor leads to oligomerization and conformation changes in the IL-2R subunits resulting in downstream signaling starting with phosphorylation of JAK1 and JAK3. In turn, JAK1 and JAK3 phosphorylate the receptor to form a docking site leading to the phosphorylation of several substrates including STAT5. This process leads to activation of several pathways including STAT, phosphoinositide-3-kinase/PI3K and mitogen-activated protein kinase/MAPK pathways. Functions as a T-cell growth factor and can increase NK-cell cytolytic activity as well. Promotes strong proliferation of activated B-cells and subsequently immunoglobulin production. Plays a pivotal role in regulating the adaptive immune system by controlling the survival and proliferation of regulatory T-cells, which are required for the maintenance of immune tolerance. Moreover, participates in the differentiation and homeostasis of effector T-cell subsets, including Th1, Th2, Th17 as well as memory CD8-positive T-cells. The polypeptide is Interleukin-2 (IL2) (Ovis aries (Sheep)).